The primary structure comprises 127 residues: Protein chibby homolog 1 (127 aa).

Positions 1 to 10 (MPLFGSTFSP) are enriched in polar residues. The segment at 1–26 (MPLFGSTFSPKKTPPRKSASLSNLHN) is disordered. Phosphoserine is present on residues serine 9 and serine 20. Residues 60 to 112 (IAETGISGGVDRREAQRLRRRNQQLEEENNLLRLKVDILLDMLSETTAESHLM) are minimal region for the interaction with PKD2. A coiled-coil region spans residues 68 to 125 (GVDRREAQRLRRRNQQLEEENNLLRLKVDILLDMLSETTAESHLMEKELDELKSVSRR). The leucine-zipper; mediates homodimerization stretch occupies residues 77 to 98 (LRRRNQQLEEENNLLRLKVDIL).

This sequence belongs to the chibby family. As to quaternary structure, homodimer. Homodimerization is essential for nuclear localization and interaction with KPNA4 but is dispensable for interaction with CTNNB1. Interacts with polycystin-2/PKD2 and GM130. Interacts with the C-terminal region of CTNNB1. Interacts (C-terminus) with TCIM (C-terminus), TCIM competes with CTNNB1 for the interaction with CBY1. Interacts with FAM92A; this interaction facilitates targeting of FAM92A to cilium basal body. Interacts with CIBAR2. Interacts with KPNA4.

It is found in the nucleus speckle. It localises to the cytoplasm. Its subcellular location is the cytoskeleton. The protein localises to the cilium basal body. The protein resides in the microtubule organizing center. It is found in the centrosome. It localises to the centriole. Its subcellular location is the golgi apparatus. The protein localises to the trans-Golgi network. The protein resides in the cell projection. It is found in the cilium. It localises to the flagellum. Its subcellular location is the nucleus. Inhibits the Wnt/Wingless pathway by binding to CTNNB1/beta-catenin and inhibiting beta-catenin-mediated transcriptional activation through competition with TCF/LEF transcription factors. Has also been shown to play a role in regulating the intracellular trafficking of polycystin-2/PKD2 and possibly of other intracellular proteins. Promotes adipocyte and cardiomyocyte differentiation. In Bos taurus (Bovine), this protein is Protein chibby homolog 1 (CBY1).